We begin with the raw amino-acid sequence, 135 residues long: MSFFRDLLESVVPTAYAEEPVEDVEVEQPEDAPEEEVSEETVEEEEDDDEDDDEDDEEEEETADPLDTLREECTKTAACKPFDHHFHECIERVTKEQEEPDYEHKHYKEDCIEEFFHLQHCVNDCVAPRLFNRLK.

A disordered region spans residues 1–70 (MSFFRDLLES…ETADPLDTLR (70 aa)). Residues 19-64 (EPVEDVEVEQPEDAPEEEVSEETVEEEEDDDEDDDEDDEEEEETAD) are compositionally biased toward acidic residues.

This sequence belongs to the UQCRH/QCR6 family. In terms of assembly, component of the ubiquinol-cytochrome c oxidoreductase (cytochrome b-c1 complex, complex III, CIII), a multisubunit enzyme composed of 10 subunits. The complex is composed of 3 respiratory subunits cytochrome b (COB), cytochrome c1 (CYT1) and Rieske protein (RIP1), 2 core protein subunits COR1 and QCR2, and 5 low-molecular weight protein subunits QCR6, QCR7, QCR8, QCR9 and QCR10. The complex exists as an obligatory dimer and forms supercomplexes (SCs) in the inner mitochondrial membrane with a monomer or a dimer of cytochrome c oxidase (complex IV, CIV), resulting in 2 different assemblies (supercomplexes III(2)IV and III(2)IV(2)).

It localises to the mitochondrion inner membrane. Component of the ubiquinol-cytochrome c oxidoreductase, a multisubunit transmembrane complex that is part of the mitochondrial electron transport chain which drives oxidative phosphorylation. The complex plays an important role in the uptake of multiple carbon sources present in different host niches. The chain is Cytochrome b-c1 complex subunit 6, mitochondrial from Candida albicans (strain SC5314 / ATCC MYA-2876) (Yeast).